The primary structure comprises 391 residues: MANPVTLPQTFLLLGSGELGKEFTIAAQRLGNRVIAVDRYPDAPAMQVAQVAEVISMLDGNALEAVVKKYQPDWIVPEVEAIRTEKLLELEAGGYRVIPTAQATNLTMNRDRIRELAAQQLGVRTARYNYATSLAELEEVSQAIGFPNVVKPVMSSSGKGQSVVNNAGEVQQAWSAAIAGARGDQTKVIVEEFIPFELEITLLTIRQWQGETLFCDPIGHRQERGDYQESWQPAPLTQRQLAQAQAIAKTVTDALGGAGIFGVEFFITPEEVIFSELSPRPHDTGMVTLISQNLNEFELHLRAILGLPIPQIKQTGPAASAVILALEAGEKLSYAGLAEALTESGTDVRLFGKPNARPHRRLGVALAQAESVDAARRLAQTVAEKVIVQTE.

Residues 18-19 (EL) and Glu78 contribute to the N(1)-(5-phospho-beta-D-ribosyl)glycinamide site. Residues Arg110, Lys151, 156 to 161 (SSGKGQ), 191 to 194 (EEFI), and Glu199 each bind ATP. One can recognise an ATP-grasp domain in the interval 115–305 (ELAAQQLGVR…EFELHLRAIL (191 aa)). Mg(2+) contacts are provided by Glu264 and Glu276. N(1)-(5-phospho-beta-D-ribosyl)glycinamide-binding positions include Asp283, Lys353, and 360 to 361 (RR).

It belongs to the PurK/PurT family. Homodimer.

The enzyme catalyses N(1)-(5-phospho-beta-D-ribosyl)glycinamide + formate + ATP = N(2)-formyl-N(1)-(5-phospho-beta-D-ribosyl)glycinamide + ADP + phosphate + H(+). Its pathway is purine metabolism; IMP biosynthesis via de novo pathway; N(2)-formyl-N(1)-(5-phospho-D-ribosyl)glycinamide from N(1)-(5-phospho-D-ribosyl)glycinamide (formate route): step 1/1. In terms of biological role, involved in the de novo purine biosynthesis. Catalyzes the transfer of formate to 5-phospho-ribosyl-glycinamide (GAR), producing 5-phospho-ribosyl-N-formylglycinamide (FGAR). Formate is provided by PurU via hydrolysis of 10-formyl-tetrahydrofolate. This is Formate-dependent phosphoribosylglycinamide formyltransferase from Synechocystis sp. (strain ATCC 27184 / PCC 6803 / Kazusa).